The following is a 108-amino-acid chain: Large ribosomal subunit protein eL30 (108 aa).

The protein belongs to the eukaryotic ribosomal protein eL30 family.

The protein is Large ribosomal subunit protein eL30 (rpl30e) of Saccharolobus solfataricus (strain ATCC 35092 / DSM 1617 / JCM 11322 / P2) (Sulfolobus solfataricus).